The following is a 284-amino-acid chain: Bifunctional protein FolD (284 aa).

Residues G164–G166, S189, and I230 contribute to the NADP(+) site.

Belongs to the tetrahydrofolate dehydrogenase/cyclohydrolase family. As to quaternary structure, homodimer.

It carries out the reaction (6R)-5,10-methylene-5,6,7,8-tetrahydrofolate + NADP(+) = (6R)-5,10-methenyltetrahydrofolate + NADPH. The enzyme catalyses (6R)-5,10-methenyltetrahydrofolate + H2O = (6R)-10-formyltetrahydrofolate + H(+). It functions in the pathway one-carbon metabolism; tetrahydrofolate interconversion. Catalyzes the oxidation of 5,10-methylenetetrahydrofolate to 5,10-methenyltetrahydrofolate and then the hydrolysis of 5,10-methenyltetrahydrofolate to 10-formyltetrahydrofolate. The protein is Bifunctional protein FolD of Desulforamulus reducens (strain ATCC BAA-1160 / DSM 100696 / MI-1) (Desulfotomaculum reducens).